The sequence spans 108 residues: Ig kappa chain V-VI region NQ2-6.1 (108 aa).

The interval 1-23 is framework-1; the sequence is QILLTQSPAIMSASPGQKVTMTC. Cysteines 23 and 87 form a disulfide. Residues 24–33 are complementarity-determining-1; it reads SASSSVSYMY. The framework-2 stretch occupies residues 34–48; sequence WYQQKPGSSPRLLIY. The segment at 49 to 55 is complementarity-determining-2; the sequence is DTSNLAS. The segment at 56-87 is framework-3; sequence GVPVRFSGSGSATSYSLTITRMQAEDAATYYC. Residues 88 to 98 form a complementarity-determining-3 region; sequence QQWSSYPPMLT. Residues 99 to 108 form a framework-4 region; sequence FGAGTKLELK.

The protein is Ig kappa chain V-VI region NQ2-6.1 of Mus musculus (Mouse).